We begin with the raw amino-acid sequence, 339 residues long: Thymidine kinase (339 aa).

11–18 is a binding site for ATP; it reads GAFGIGKT. The active-site Proton acceptor is the E39. Residues Y59 and Q83 each contribute to the substrate site. ATP is bound at residue R176. A substrate-binding site is contributed by R182.

Belongs to the herpesviridae thymidine kinase family. Homodimer.

It carries out the reaction thymidine + ATP = dTMP + ADP + H(+). Its function is as follows. Catalyzes the transfer of the gamma-phospho group of ATP to thymidine to generate dTMP in the salvage pathway of pyrimidine synthesis. The dTMP serves as a substrate for DNA polymerase during viral DNA replication. Allows the virus to be reactivated and to grow in non-proliferative cells lacking a high concentration of phosphorylated nucleic acid precursors. This is Thymidine kinase from Amazona oratrix (yellow-headed parrot).